The primary structure comprises 1067 residues: Protein bric-a-brac 2 (1067 aa).

The tract at residues 30 to 121 is disordered; sequence MAPPEEPKMV…PPRPLTSSEV (92 aa). 2 stretches are compositionally biased toward basic and acidic residues: residues 47–62 and 86–98; these read HLED…REVE and KSPE…ELVK. A Phosphotyrosine modification is found at Tyr55. Phosphoserine occurs at positions 56, 87, and 147. A BTB domain is found at 223–288; that stretch reads VDVTLSCEGH…MYKGEINVCQ (66 aa). Disordered regions lie at residues 312 to 412, 444 to 505, and 525 to 563; these read GRGE…QSQP, ANQR…AAQH, and GAAG…SHHD. Residues 326-335 show a composition bias toward acidic residues; sequence FDDEDEEEEL. Ser377 carries the phosphoserine modification. Thr384 is subject to Phosphothreonine. Residues 391–412 show a composition bias toward low complexity; that stretch reads GGESEISERGSSGTPGQSQSQP. Gly residues-rich tracts occupy residues 525–538 and 545–556; these read GAAG…GSGS and GGTGVAGSGAGA. The region spanning 635 to 687 is the HTH psq-type domain; that stretch reads FRERGPLKSWRPEAMAEAIFSVLKEGLSLSQAARKFDIPYPTFVLYANRVHNM. The segment at residues 645–690 is a DNA-binding region (H-T-H motif); it reads RPEAMAEAIFSVLKEGLSLSQAARKFDIPYPTFVLYANRVHNMLGP. Residues 697 to 708 constitute a DNA-binding region (a.T hook); the sequence is DPRPKARGRPQR. 3 disordered regions span residues 796–829, 860–879, and 891–967; these read QILS…PHAQ, AKHQ…PDLS, and VMPS…PYSA. A compositionally biased stretch (low complexity) spans 812–829; the sequence is AHHQQQPSHHQQQSPHAQ. Residues 904 to 914 show a composition bias toward low complexity; the sequence is AAPNSAASYAR. Residues 915-933 show a composition bias toward basic and acidic residues; the sequence is ELSRERERDRERERERELS. Positions 934–949 are enriched in low complexity; the sequence is RQYGSQSRGSSSGSGS.

Leg imaginal disk at the central region of the tarsus and in eye antenna disk at the basal cylinder.

The protein localises to the nucleus. Its function is as follows. Probably acts as a transcriptional regulator. Required for the specification of the tarsal segment. Also involved in antenna development. The chain is Protein bric-a-brac 2 (bab2) from Drosophila melanogaster (Fruit fly).